We begin with the raw amino-acid sequence, 310 residues long: Porphobilinogen deaminase (310 aa).

An S-(dipyrrolylmethanemethyl)cysteine modification is found at Cys242.

Belongs to the HMBS family. In terms of assembly, monomer. The cofactor is dipyrromethane.

The enzyme catalyses 4 porphobilinogen + H2O = hydroxymethylbilane + 4 NH4(+). Its pathway is porphyrin-containing compound metabolism; protoporphyrin-IX biosynthesis; coproporphyrinogen-III from 5-aminolevulinate: step 2/4. Functionally, tetrapolymerization of the monopyrrole PBG into the hydroxymethylbilane pre-uroporphyrinogen in several discrete steps. The protein is Porphobilinogen deaminase of Psychromonas ingrahamii (strain DSM 17664 / CCUG 51855 / 37).